A 23-amino-acid polypeptide reads, in one-letter code: Endochitinase B (23 aa).

It belongs to the glycosyl hydrolase 19 family. Chitinase class I subfamily.

The enzyme catalyses Random endo-hydrolysis of N-acetyl-beta-D-glucosaminide (1-&gt;4)-beta-linkages in chitin and chitodextrins.. Defense against chitin-containing fungal pathogens. The protein is Endochitinase B of Pisum sativum (Garden pea).